A 349-amino-acid polypeptide reads, in one-letter code: KH domain-containing, RNA-binding, signal transduction-associated protein 2 (349 aa).

The KH domain maps to 65-135 (LIPVKQYPKF…HLSDELHVLI (71 aa)). 2 disordered regions span residues 181–263 (SEES…PPPA) and 320–349 (EEWT…YGRY). Residues 218 to 231 (RGVLTPRGTTVTRG) are compositionally biased toward low complexity. An omega-N-methylarginine mark is found at Arg-230 and Arg-240. The span at 340–349 (GYREHPYGRY) shows a compositional bias: basic and acidic residues.

The protein belongs to the KHDRBS family. Self-associates to form homooligomers. Interacts with SAFB, SFRS9 and YTHDC1. Found in a complex with KHDRBS1, KHDRBS2 and KHDRBS3. Interacts with RBMX. Interacts with the SH3 domains of FYN and PLCG1. Interacts with the SH2 domains of FYN, GRAP2, PLCG1 and RASA1. Interacts with RBMX. Methylated. Post-translationally, phosphorylated on tyrosine residues by FYN. Tyrosine phosphorylated by PTK6 and SRC. Tyrosine phosphorylated by SRC during mitosis. In terms of tissue distribution, expressed in the cortex, cerebellum, striatum, midbrain, brainstem and thalamus of the brain (at protein level). Expressed in neurons (at protein level). Expressed in brain and testis. Expressed in the dentate gyrus of the hippocampus.

Its subcellular location is the nucleus. Functionally, RNA-binding protein that plays a role in the regulation of alternative splicing and influences mRNA splice site selection and exon inclusion. Its phosphorylation by FYN inhibits its ability to regulate splice site selection. Induces an increased concentration-dependent incorporation of exon in CD44 pre-mRNA by direct binding to purine-rich exonic enhancer. May function as an adapter protein for Src kinases during mitosis. Binds both poly(A) and poly(U) homopolymers. Phosphorylation by PTK6 inhibits its RNA-binding ability. The polypeptide is KH domain-containing, RNA-binding, signal transduction-associated protein 2 (Khdrbs2) (Rattus norvegicus (Rat)).